The primary structure comprises 357 residues: Peptide chain release factor 1 (357 aa).

The residue at position 234 (glutamine 234) is an N5-methylglutamine.

The protein belongs to the prokaryotic/mitochondrial release factor family. In terms of processing, methylated by PrmC. Methylation increases the termination efficiency of RF1.

It localises to the cytoplasm. Peptide chain release factor 1 directs the termination of translation in response to the peptide chain termination codons UAG and UAA. The polypeptide is Peptide chain release factor 1 (Arthrobacter sp. (strain FB24)).